Reading from the N-terminus, the 644-residue chain is Transcription factor cep-1 (644 aa).

The DNA-binding element occupies 223–418 (EKWMEIDVLK…NFCEREDAKQ (196 aa)). Positions 307, 310, 361, and 365 each coordinate Zn(2+). The segment at 528–555 (TNYSFRTLTLSTAEYTKVVEFLAREAKV) is required for tertiary structure stability of the protein.

Belongs to the p53 family. Homodimer. Interacts (via C-terminus domain) with prmt-5; not methylated by prmt-5. Interacts with cbp-1 (via HAT domain); cep-1 transcriptional activity may be inhibited by interaction with methylated cbp-1. Component of a complex that contains prmt-5 and cbp-1. Interacts with ape-1; the interaction inhibits pro-apoptotic activity of cep-1. The cofactor is Zn(2+). In terms of processing, phosphorylated in response to IR-induced DNA damage which is thought to be mediated by akt-1. As to expression, expressed in pharyngeal muscle and neurons.

The protein resides in the nucleus. Transcriptional activator that binds the same DNA consensus sequence as p53. Has a role in normal development to ensure proper meiotic chromosome segregation. Promotes apoptosis under conditions of cellular and genotoxic stress in response to DNA damage, hypoxia, or starvation. Regulates germline apoptosis in response to DNA damage. Its pro-apoptotic activity is inhibited when bound to ape-1 in vitro. Plays a role in cell cycle arrest in the germline in response to DNA damage by UV-C light. However, not required for survival in response to DNA damage induced by UV-C light, indicating that it is unlikely to be involved in DNA repair. Required for induction of ced-13 in response to DNA damage. Regulates DNA damage-induced apoptosis by inducing transcription of the programmed cell death activator egl-1. Regulates germline proliferation by activating phg-1. Modulates lifespan. In Caenorhabditis elegans, this protein is Transcription factor cep-1.